Reading from the N-terminus, the 120-residue chain is Large ribosomal subunit protein eL34 (120 aa).

This sequence belongs to the eukaryotic ribosomal protein eL34 family.

This chain is Large ribosomal subunit protein eL34 (RPL34), found in Pisum sativum (Garden pea).